The sequence spans 353 residues: 3-isopropylmalate dehydrogenase (353 aa).

76–89 (GPKWDDPRAKVRPE) contributes to the NAD(+) binding site. Substrate-binding residues include arginine 96, arginine 106, arginine 134, and aspartate 223. 3 residues coordinate Mg(2+): aspartate 223, aspartate 247, and aspartate 251. Position 281–293 (281–293 (GSAPDIAGKGIAN)) interacts with NAD(+).

The protein belongs to the isocitrate and isopropylmalate dehydrogenases family. LeuB type 1 subfamily. As to quaternary structure, homodimer. The cofactor is Mg(2+). Requires Mn(2+) as cofactor.

It localises to the cytoplasm. It catalyses the reaction (2R,3S)-3-isopropylmalate + NAD(+) = 4-methyl-2-oxopentanoate + CO2 + NADH. It functions in the pathway amino-acid biosynthesis; L-leucine biosynthesis; L-leucine from 3-methyl-2-oxobutanoate: step 3/4. Functionally, catalyzes the oxidation of 3-carboxy-2-hydroxy-4-methylpentanoate (3-isopropylmalate) to 3-carboxy-4-methyl-2-oxopentanoate. The product decarboxylates to 4-methyl-2 oxopentanoate. The sequence is that of 3-isopropylmalate dehydrogenase from Anaeromyxobacter dehalogenans (strain 2CP-C).